Reading from the N-terminus, the 205-residue chain is Large ribosomal subunit protein uL4 (205 aa).

The disordered stretch occupies residues arginine 44–serine 79.

Belongs to the universal ribosomal protein uL4 family. In terms of assembly, part of the 50S ribosomal subunit.

Functionally, one of the primary rRNA binding proteins, this protein initially binds near the 5'-end of the 23S rRNA. It is important during the early stages of 50S assembly. It makes multiple contacts with different domains of the 23S rRNA in the assembled 50S subunit and ribosome. Its function is as follows. Forms part of the polypeptide exit tunnel. The protein is Large ribosomal subunit protein uL4 of Coxiella burnetii (strain RSA 331 / Henzerling II).